The following is a 558-amino-acid chain: Solute carrier family 22 member 6-A (558 aa).

Over methionine 1–arginine 15 the chain is Cytoplasmic. The helical transmembrane segment at phenylalanine 16–leucine 36 threads the bilayer. The Extracellular segment spans residues leucine 37–glutamine 140. A helical transmembrane segment spans residues leucine 141–serine 161. Residues aspartate 162–arginine 167 lie on the Cytoplasmic side of the membrane. Residues alanine 168–proline 188 form a helical membrane-spanning segment. Over asparagine 189–arginine 197 the chain is Extracellular. Residues phenylalanine 198–tryptophan 218 traverse the membrane as a helical segment. The Cytoplasmic portion of the chain corresponds to valine 219–threonine 225. The helical transmembrane segment at isoleucine 226–alanine 246 threads the bilayer. Residues tyrosine 247–arginine 253 lie on the Extracellular side of the membrane. The helical transmembrane segment at tryptophan 254–proline 274 threads the bilayer. At glutamate 275–arginine 342 the chain is on the cytoplasmic side. Residues isoleucine 343–methionine 363 traverse the membrane as a helical segment. Topologically, residues aspartate 364–asparagine 369 are extracellular. Residues valine 370–serine 390 form a helical membrane-spanning segment. Topologically, residues threonine 391–lysine 400 are cytoplasmic. The helical transmembrane segment at phenylalanine 401–proline 421 threads the bilayer. Topologically, residues histidine 422–arginine 428 are extracellular. Residues threonine 429 to tyrosine 449 traverse the membrane as a helical segment. The Cytoplasmic portion of the chain corresponds to threonine 450–glycine 462. Residues leucine 463–leucine 483 form a helical membrane-spanning segment. The Extracellular portion of the chain corresponds to glycine 484–proline 488. A helical transmembrane segment spans residues phenylalanine 489–leucine 509. The Cytoplasmic portion of the chain corresponds to proline 510–leucine 558. Basic and acidic residues predominate over residues glutamate 539–lysine 550. Residues glutamate 539 to leucine 558 form a disordered region.

Belongs to the major facilitator (TC 2.A.1) superfamily. Organic cation transporter (TC 2.A.1.19) family. Glycosylated. Glycosylation is necessary for proper targeting of the transporter to the plasma membrane.

Its subcellular location is the cell membrane. The protein localises to the basolateral cell membrane. The protein resides in the basal cell membrane. Its function is as follows. Involved in the renal elimination of endogenous and exogenous organic anions. Mediates the sodium-independent uptake of p-aminohippurate (PAH), 2,3-dimercapto-1-propanesulfonic acid (DMPS), cidofovir, adefovir, 9-(2-phosphonylmethoxyethyl) guanine (PMEG), 9-(2-phosphonylmethoxyethyl) diaminopurine (PMEDAP), ochratoxin (OTA), acyclovir (ACV), 3'-azido-3-'deoxythymidine (AZT), cimetidine (CMD), 2,4-dichloro-phenoxyacetate (2,4-D), hippurate (HA), indoleacetate (IA), indoxyl sulfate (IS) and 3-carboxy-4-methyl-5-propyl-2-furanpropionate (CMPF) and edaravone sulfate. PAH uptake is inhibited by p-chloromercuribenzenesulphonate (PCMBS), diethyl pyrocarbonate (DEPC), indomethacin, sulindac, diclofenac, carprofen, okadaic acid, benzothiazolylcysteine (BTC), S-chlorotrifluoroethylcysteine (CTFC), cysteine S-conjugates S-dichlorovinylcysteine (DCVC), furosemide, steviol, phorbol 12-myristate 13-acetate (PMA), calcium ionophore A23187, benzylpenicillin, bumetamide, losartan, probenecid, phenol red, urate, glutarate and alpha-ketoglutarate. This chain is Solute carrier family 22 member 6-A (slc22a6-a), found in Xenopus laevis (African clawed frog).